The sequence spans 393 residues: Pyrimidine monooxygenase RutA (393 aa).

FMN-binding positions include 79 to 80 (IK), Asn145, Glu154, 170 to 171 (RY), and Ser220.

It belongs to the NtaA/SnaA/DszA monooxygenase family. RutA subfamily.

The enzyme catalyses uracil + FMNH2 + NADH + O2 = (Z)-3-ureidoacrylate + FMN + NAD(+) + H2O + H(+). It catalyses the reaction thymine + FMNH2 + NADH + O2 = (Z)-2-methylureidoacrylate + FMN + NAD(+) + H2O + H(+). Catalyzes the pyrimidine ring opening between N-3 and C-4 by an unusual flavin hydroperoxide-catalyzed mechanism, adding oxygen atoms in the process to yield ureidoacrylate peracid, that immediately reacts with FMN forming ureidoacrylate and FMN-N(5)-oxide. The FMN-N(5)-oxide reacts spontaneously with NADH to produce FMN. Requires the flavin reductase RutF to regenerate FMN in vivo. The sequence is that of Pyrimidine monooxygenase RutA from Escherichia coli O18:K1:H7 (strain IHE3034 / ExPEC).